Consider the following 258-residue polypeptide: 6-phosphogluconolactonase (258 aa).

The protein belongs to the glucosamine/galactosamine-6-phosphate isomerase family. 6-phosphogluconolactonase subfamily.

It catalyses the reaction 6-phospho-D-glucono-1,5-lactone + H2O = 6-phospho-D-gluconate + H(+). It participates in carbohydrate degradation; pentose phosphate pathway; D-ribulose 5-phosphate from D-glucose 6-phosphate (oxidative stage): step 2/3. Its function is as follows. Hydrolysis of 6-phosphogluconolactone to 6-phosphogluconate. The polypeptide is 6-phosphogluconolactonase (pgl) (Chlamydia pneumoniae (Chlamydophila pneumoniae)).